Here is a 108-residue protein sequence, read N- to C-terminus: Large ribosomal subunit protein uL24 (108 aa).

This sequence belongs to the universal ribosomal protein uL24 family. Part of the 50S ribosomal subunit.

Its function is as follows. One of two assembly initiator proteins, it binds directly to the 5'-end of the 23S rRNA, where it nucleates assembly of the 50S subunit. One of the proteins that surrounds the polypeptide exit tunnel on the outside of the subunit. This chain is Large ribosomal subunit protein uL24, found in Mycoplasma mycoides subsp. mycoides SC (strain CCUG 32753 / NCTC 10114 / PG1).